A 509-amino-acid polypeptide reads, in one-letter code: Zinc finger CCCH-type with G patch domain-containing protein (509 aa).

Residues 41–61 (TRGSEPEATSDTKTPETSDNI) form a disordered region. The segment covering 47 to 58 (EATSDTKTPETS) has biased composition (polar residues). A C3H1-type zinc finger spans residues 155–178 (PCNYFLEGECRFDEVRCRYSHGAL). The segment at 254 to 278 (DDDLTSESEESNETDGSDAGNDSDM) is disordered. The G-patch domain occupies 310 to 356 (TRGIGSKLMANMGYIHGTGLGSDGRGIVTPVSAQILPQGRSLDACME). The tract at residues 410–433 (GSQQTENANKKTKPNNLQQHSNKT) is disordered. Residues 423 to 433 (PNNLQQHSNKT) are compositionally biased toward polar residues.

The protein localises to the nucleus. Functionally, transcription repressor. The polypeptide is Zinc finger CCCH-type with G patch domain-containing protein (Drosophila mojavensis (Fruit fly)).